The following is a 501-amino-acid chain: Mitochondrial inner membrane i-AAA protease supercomplex subunit MGR3 (501 aa).

The Mitochondrial matrix segment spans residues 1–77 (MLLQGMRLSQ…PKPNLKKKNR (77 aa)). Residues 39–72 (RPPASNFNTQESAPIPESPANSPTRPQMAPKPNL) form a disordered region. A helical membrane pass occupies residues 78 to 95 (SLMYSIIGVSIVGLYFWF). At 96–501 (KSNSRKQKLP…LKAAKKEGLN (406 aa)) the chain is on the mitochondrial intermembrane side. 4 TPR repeats span residues 109-144 (QKVW…CDRS), 154-187 (TRIE…FFEA), 386-420 (GTYI…AKRN), and 440-473 (ALST…AKET).

The protein belongs to the MGR3 family. As to quaternary structure, component of the mitochondrial inner membrane i-AAA protease supercomplex composed of MGR1, MGR3 and YME1. With MGR1, forms a subcomplex that binds to YME1 and to substrates to facilitate proteolysis.

Its subcellular location is the mitochondrion inner membrane. Its function is as follows. Component of the mitochondrial inner membrane i-AAA protease supercomplex, which degrades misfolded mitochondrial proteins. Together with MGR1, functions in an adapter complex that targets substrates to the i-AAA protease for degradation. Required for growth of cells lacking the mitochondrial genome. The sequence is that of Mitochondrial inner membrane i-AAA protease supercomplex subunit MGR3 (MGR3) from Saccharomyces cerevisiae (strain ATCC 204508 / S288c) (Baker's yeast).